We begin with the raw amino-acid sequence, 147 residues long: Putative acetyltransferase BSU40680 (147 aa).

The N-acetyltransferase domain occupies 1 to 144 (MNVKKITSEQ…PHVLMTKQDD (144 aa)). CoA is bound by residues 74–76 (ICI) and 115–117 (GFY).

The protein belongs to the UPF0039 (ElaA) family.

Functionally, could catalyze the transfer of an acetyl group from acetyl coenzyme A (AcCoA) to an acceptor substrate and release both CoA and the acetylated product. This is Putative acetyltransferase BSU40680 (yybD) from Bacillus subtilis (strain 168).